Reading from the N-terminus, the 543-residue chain is Cysteine/serine-rich nuclear protein 2 (543 aa).

Residue methionine 1 is modified to N-acetylmethionine. Disordered stretches follow at residues 1-51, 281-305, and 488-543; these read MDAF…SFTP, KRQVSRPAAPDEEPSPTASCSLTGA, and DCNP…PLAV. Residues 31 to 40 show a composition bias toward low complexity; sequence SSDSADSCDS. 2 stretches are compositionally biased toward polar residues: residues 42–51 and 296–305; these read NPPTTASFTP and PTASCSLTGA.

This sequence belongs to the AXUD1 family.

It localises to the nucleus. In terms of biological role, binds to the consensus sequence 5'-AGAGTG-3' and has transcriptional activator activity. May play a role in apoptosis. The protein is Cysteine/serine-rich nuclear protein 2 (CSRNP2) of Homo sapiens (Human).